The chain runs to 533 residues: Homeobox protein DTH-1 (533 aa).

Disordered stretches follow at residues 1–28 and 308–378; these read MSSNGDSVKYDTNFDREGYSTDSSNECP and LPQN…GKKR. Over residues 8–19 the composition is skewed to basic and acidic residues; sequence VKYDTNFDREGY. Residues 308-317 show a composition bias toward low complexity; the sequence is LPQNLPNPNQ. Polar residues predominate over residues 318–333; that stretch reads TDSIYSSSINENNQPI. A compositionally biased stretch (low complexity) spans 360-371; the sequence is SVENNDNENSSS. A DNA-binding region (homeobox) is located at residues 377-436; sequence KRKRRVLFSKKQILELERHFRQKKYLSAPEREHLANLIGLSPTQVKIWFQNHRYKMKRAH.

This sequence belongs to the NK-2 homeobox family. Intestine and unidentified peripheral parenchymal cells. Slightly higher levels in the cephalic region compared to other body regions.

It localises to the nucleus. This protein might be involved in determination and/or differentiation of nerve cells in the continuous replacement of neurons in the cephalic region. The polypeptide is Homeobox protein DTH-1 (DTH-1) (Girardia tigrina (Planarian)).